Consider the following 438-residue polypeptide: tRNA modification GTPase MnmE (438 aa).

The (6S)-5-formyl-5,6,7,8-tetrahydrofolate site is built by Arg20, Glu79, and Lys119. The 146-residue stretch at 215–360 folds into the TrmE-type G domain; it reads GVEVAIVGPP…LEAALAARVG (146 aa). GTP contacts are provided by residues 225-230, 244-250, and 269-272; these read NAGKSS, SDEAGTT, and DTAG. The Mg(2+) site is built by Ser229 and Thr250. (6S)-5-formyl-5,6,7,8-tetrahydrofolate is bound at residue Lys438.

The protein belongs to the TRAFAC class TrmE-Era-EngA-EngB-Septin-like GTPase superfamily. TrmE GTPase family. In terms of assembly, homodimer. Heterotetramer of two MnmE and two MnmG subunits. K(+) is required as a cofactor.

The protein localises to the cytoplasm. In terms of biological role, exhibits a very high intrinsic GTPase hydrolysis rate. Involved in the addition of a carboxymethylaminomethyl (cmnm) group at the wobble position (U34) of certain tRNAs, forming tRNA-cmnm(5)s(2)U34. The protein is tRNA modification GTPase MnmE of Parvibaculum lavamentivorans (strain DS-1 / DSM 13023 / NCIMB 13966).